Reading from the N-terminus, the 130-residue chain is Sirohydrochlorin cobaltochelatase (130 aa).

His-12 acts as the Proton acceptor in catalysis. Residue His-12 participates in Co(2+) binding. His-12 contributes to the Ni(2+) binding site. Residues Glu-48 and 73–78 (LASGVH) contribute to the substrate site. Position 78 (His-78) interacts with Co(2+). Residue His-78 participates in Ni(2+) binding.

Belongs to the CbiX family. CbiXS subfamily. As to quaternary structure, homotetramer; dimer of dimers.

It catalyses the reaction Co-sirohydrochlorin + 2 H(+) = sirohydrochlorin + Co(2+). The enzyme catalyses Ni-sirohydrochlorin + 2 H(+) = sirohydrochlorin + Ni(2+). Its pathway is cofactor biosynthesis; adenosylcobalamin biosynthesis; cob(II)yrinate a,c-diamide from sirohydrochlorin (anaerobic route): step 1/10. Catalyzes the insertion of Co(2+) into sirohydrochlorin as part of the anaerobic pathway to cobalamin biosynthesis (Potential). Involved in the biosynthesis of the unique nickel-containing tetrapyrrole coenzyme F430, the prosthetic group of methyl-coenzyme M reductase (MCR), which plays a key role in methanogenesis and anaerobic methane oxidation. Catalyzes the insertion of Ni(2+) into sirohydrochlorin to yield Ni-sirohydrochlorin. This chain is Sirohydrochlorin cobaltochelatase, found in Methanosarcina acetivorans (strain ATCC 35395 / DSM 2834 / JCM 12185 / C2A).